The following is a 178-amino-acid chain: Translation initiation factor IF-3 (178 aa).

Residues 1-20 (MRRPFKAAAPTKDGPRSNRD) are disordered.

The protein belongs to the IF-3 family. As to quaternary structure, monomer.

The protein localises to the cytoplasm. Functionally, IF-3 binds to the 30S ribosomal subunit and shifts the equilibrium between 70S ribosomes and their 50S and 30S subunits in favor of the free subunits, thus enhancing the availability of 30S subunits on which protein synthesis initiation begins. The sequence is that of Translation initiation factor IF-3 from Mesorhizobium japonicum (strain LMG 29417 / CECT 9101 / MAFF 303099) (Mesorhizobium loti (strain MAFF 303099)).